The chain runs to 471 residues: Elongation factor 1-alpha (471 aa).

The tr-type G domain occupies 10 to 239; the sequence is KPRLNACFIG…EALNYQDVPE (230 aa). A G1 region spans residues 19–26; the sequence is GHVDSGKS. Residue 19-26 coordinates GTP; that stretch reads GHVDSGKS. The interval 75–79 is G2; that stretch reads GITIT. Positions 96–99 are G3; sequence DCPG. Residues 96 to 100 and 156 to 159 each bind GTP; these read DCPGH and NKMD. The interval 156–159 is G4; that stretch reads NKMD. The segment at 196-198 is G5; the sequence is SAF.

This sequence belongs to the TRAFAC class translation factor GTPase superfamily. Classic translation factor GTPase family. EF-Tu/EF-1A subfamily. In terms of assembly, component of the eukaryotic elongation factor 1 complex (eEF1).

The protein resides in the cytoplasm. Its pathway is protein biosynthesis; polypeptide chain elongation. Functionally, GTP-binding component of the eukaryotic elongation factor 1 complex (eEF1). In its active GTP-bound form, binds to and delivers aminoacyl-tRNA to the A-site of ribosomes during protein biosynthesis. In the presence of a correct codon-anticodon match between the aminoacyl-tRNA and the A-site codon of the ribosome-bound mRNA, the ribosome acts as a GTPase activator and the GTP is hydrolyzed. The inactive GDP-bound form leaves the ribosome and must be recycled by its guanine nucleotide exchange factor (GEF) (eEF1B subcomplex) before binding another molecule of aminoacyl-tRNA. Required for nuclear export of aminoacyl-tRNAs. May also be involved in translational quality control by targeting cotranslationally damaged proteins to the proteasome. This Encephalitozoon cuniculi (strain GB-M1) (Microsporidian parasite) protein is Elongation factor 1-alpha (TEF1).